A 318-amino-acid chain; its full sequence is Ribosomal RNA small subunit methyltransferase H (318 aa).

S-adenosyl-L-methionine is bound by residues 35 to 37 (GGH), Asp-54, Phe-83, Asp-104, and Gln-111.

It belongs to the methyltransferase superfamily. RsmH family.

The protein localises to the cytoplasm. It catalyses the reaction cytidine(1402) in 16S rRNA + S-adenosyl-L-methionine = N(4)-methylcytidine(1402) in 16S rRNA + S-adenosyl-L-homocysteine + H(+). In terms of biological role, specifically methylates the N4 position of cytidine in position 1402 (C1402) of 16S rRNA. This is Ribosomal RNA small subunit methyltransferase H from Latilactobacillus sakei subsp. sakei (strain 23K) (Lactobacillus sakei subsp. sakei).